The sequence spans 440 residues: MGDWSFLGNILEEVNEHSTVIGRVWLTVLFIFRILILGTAAEFVWGDEQSDFVCNTQQPGCENVCYDEAFPISHIRLWVLQIIFVSTPSLVYVGHAVHHVRMEEKRKEREAEELSQQSPGNGGERAPLAADQGSVKKSSSSSKGTKKFRLEGTLLRTYVCHIIFKTLFEVGFIVGHYFLYGFRILPLYRCSRWPCPNVVDCFVSRPTEKTIFILFMLSVASVSLFLNILEMSHLGLKKIRSAFKRPVEQPLGEIPEKSLHSIAVSSIQKAKGYQLLEEEKIVSHYFPLTEVGMVEASPLSAKPFSQFEEKVGPGPLGDLSRAYQETLPSYAQVGAQEGVEEEQPIEAAAEPEVGDKSQEAERVSTEGEETLAVLEEEKVEPPEVEKEAEKEETPPEKVSKQELTPEKAPSLCAELPGEDTRPLSRLSKASSRARSDDLTV.

The stretch at 2–12 (GDWSFLGNILE) is an intramembrane region. The Cytoplasmic segment spans residues 13 to 21 (EVNEHSTVI). Residues 22 to 42 (GRVWLTVLFIFRILILGTAAE) form a helical membrane-spanning segment. The Extracellular portion of the chain corresponds to 43–71 (FVWGDEQSDFVCNTQQPGCENVCYDEAFP). 3 disulfides stabilise this stretch: C54/C201, C61/C195, and C65/C190. A helical transmembrane segment spans residues 72–92 (ISHIRLWVLQIIFVSTPSLVY). The Cytoplasmic portion of the chain corresponds to 93 to 161 (VGHAVHHVRM…GTLLRTYVCH (69 aa)). Residues 108–144 (EREAEELSQQSPGNGGERAPLAADQGSVKKSSSSSKG) form a disordered region. Residues 162–182 (IIFKTLFEVGFIVGHYFLYGF) traverse the membrane as a helical segment. The Extracellular portion of the chain corresponds to 183–210 (RILPLYRCSRWPCPNVVDCFVSRPTEKT). Residues 211-231 (IFILFMLSVASVSLFLNILEM) form a helical membrane-spanning segment. Residues 232–440 (SHLGLKKIRS…SRARSDDLTV (209 aa)) lie on the Cytoplasmic side of the membrane. A disordered region spans residues 334–440 (GAQEGVEEEQ…SRARSDDLTV (107 aa)). Basic and acidic residues-rich tracts occupy residues 353–365 (VGDK…RVST) and 375–405 (EEEK…ELTP). The segment covering 423-432 (LSRLSKASSR) has biased composition (low complexity).

Belongs to the connexin family. Alpha-type (group II) subfamily. A hemichannel or connexon is composed of a hexamer of connexins. A functional gap junction is formed by the apposition of two hemichannels. Forms heteromeric channels with GJA3. As to expression, detected in eye lens (at protein level). Eye lens.

The protein resides in the cell membrane. It is found in the cell junction. Its subcellular location is the gap junction. In terms of biological role, structural component of eye lens gap junctions. Gap junctions are dodecameric channels that connect the cytoplasm of adjoining cells. They are formed by the docking of two hexameric hemichannels, one from each cell membrane. Small molecules and ions diffuse from one cell to a neighboring cell via the central pore. The sequence is that of Gap junction alpha-8 protein (GJA8) from Ovis aries (Sheep).